Reading from the N-terminus, the 2682-residue chain is MQTEEWKMANQDNNKPQRDSERCVFLFGSLSLSFDASAFAQVRKAIANDERNSWLVNAARQLPQDLETILSGLPSLNNSNTRARKQLADLHNAIIGGRPLDTPFPLPNTVLIPLVVIEQLSQYADFARQKGVERSGTPDGWPAIEADTKSLGLCTGNLAAFATSSARSWGDFQKYGAAAVRLGLLVGLVIDSQDEAFDSRRWRSLSVAWSGSQGGEELQRILPEFDETYVSVYYDACRSTITTPVSSLPTLVHRLKAAGLGVTEITLYGAFHSAARNSAVLEQLTVFCDSHADFQLSTSAASVAALQANDNTDHKDIIRKQGALHAKALRRILVEPAQWFDALAAVLGEEGERARVVSFGSERSVPLSLAMRSNVRVVHATDTHDGNRGTNADGGERMWAESDIAVIGMACKVAGAEGVEEFWELLVEGHSQHRDISASERFSFDDTAFRTASDSNMQRKWYANLVDGHDQFDHRFFKKSARESAAMDPQQRQLLQVAYQAAEQAGCFTRTNSVCDGNVGCFVGVCLSDYESNVGCHPANAFTATGNLQGFIAGKVSHFLGWTGPALTIDTACSSSLVAVHQACASILAGECNSALAGGTHIMTTAGWFQNLAAGAFVSPTGQCKPFDAAADGYCRGEGVGAVVLKKLSQAIADGDRVLGVIGATAVQQNQNCTPIFVPNVPSLSALFTTVTAKAHVKPASVSVVEAHGTGTAVGDPAEWASIRQTLGGLNRPPERPLMVSSTKGLVGHLECTSGIISLIKVLLMVQKRMLPPQASFDTLNPVLNAQPSDHMFVPRRAQPWDAEFRVALINNYGASGSNASMIVMQPPTFDTVAPIHLAAAVRSPDCRYPFWLSGLDSSSLRRRAKALRRFLSRGLGPASSLAPSLASISYNLAHQGDRALDQRITFTAASVTELDQHLAACEDGSDNKPAAPASTAASKQTVVMCFGGQVSTHIGLDPHVYNSVGLLRQHLDNVDTIIQSLGYTTIFPAIFQRVPLADTVHLQTMLFAMQFACAQAWIDSGLRPTVLVGHSFGELTALCVSGALSLVDAVKMIARRAAIVRDAWGIDRGTMMAVEGDLYEVEQLLVDVNSSISPAVPISIACYNGPRSFTLAGSTDTINEVDARLCAQPGRSIKSRRLNVTNAFHSALVDPLLHRLEESCEDLTFRRPVLYLERALDSTSSGPEWSARSVAEHMRNPVYFHHALQRIVQIDPSSSFVFVEAGTNSSITAMTSRALDNKIIKGTSTFHGLSIANCDDGWNKLTDSIMSLWKAGLNVQHWAHHQRQRRYQADIEPLLLPPYQFDPNARHWMDLKPLPRQLPALIEEATKTEADKKPEGLLTFVGFQDSSTQMQAQFQINTNTEEYKSLLLGHMTIQTAPICPATMQISFVIEAIVTIRHELQTEQEPQIQDVQYRSPVCANLSRKTWIEIKDENERGLAWRFEVFSTESHSGPRTIHTTGKIKFTNARDATLQRQLMQFERLFGHHRATDLLKSAEVDEVLANRSIYLIFSEIVDYGEEYRGLQKFASKGHESAGHVVRRHSHDRKTPRFDAHLADTFCQLGGIWINCMTERSQDDIYLANSIDQWIRSPHNAGAAGSTVEPSKEYHVYATHHRPSDKLSLTDVFVFDVKAGKLVEVILGIAYVKIPKLSMQKMLTRLTGSEWLNNTPATSMNQAPVSAPNPATRPSIVDLPSAVTQVPVLLPQGVKPSAEIRPSEPPSRSLLENITERVKAVVADLSGVEVTEIGDECDLADLGIDSLAGMQMVHEIEGALHVTLPEKEILLVVTMRDLMKVVTGVVEVDFEATDSLSSDNDLPSIATSSEGERVATNLTTPAPQSDVDKDEHEAFESNDLRLPAAVVLEAFKETRELTDEHVLGVGQASYVSEALPLQTELSISLTLEAFEALGAGLRNAGPGEQLFRIVHDEEHARFVDYMYDMLEIETQIIKVDRGIITRTAVPFPERSSTVVYAELRRRFPDQRAADELTYYAGTHLMQVLSGETTGVKLIFGTTEGRELVSTFYGEWPLNQVMYTQMEDFFTRLASKLPATNDNKPLRILEMGAGTGGTTKRLVPLLARLQIPVEYTFTDLAPSFVRAARNKWEKLYPWMRFRVHDIEKAPGEDLVNTQHFVLASNAIHATRSIRESTLNVRKFLRSDGYLLMGEMTRTPYWVDIIFGLFEGWWLFDDGRRHALTHESRWETDLQSAGYGHVYWTEGTRPESEIEKLILAAASLTNLAGSDFVQSERNPITKRHQFDNEVSGGCAEREKLIMEYVCDSTQDFAKTFKVPMSSIPRSLHHKSKGKWIVVTGATGGLGAHLVAKAAVRSDVERVVCLNRRSKQNALERQMHALRKQGISLDSECLAKLDVHVTELAQPSSLGLPNELYNLLLDNVTHIVHNAWLMNSKWTVKRFEPQIRIMKHMIHFARDISLRHTESDPVTFIFVSSIATVGFHPLLAKSPIVPEDRVSIDSVLPTGYGEAKYICERMLDTSLHRYPSRFRAAAVRLGQIAGSSLNGYWNPMEHVSFLIKSSQTLRALPNLPGSLGWTPADAIADSLLDICTQPGDVALHPLYHIDNPVRQNWDEMLAVLADVLNISQGASGIVPFDEWLRRVRDWPHTEDNASDGKNPAYVLVDFLEDHFVRMSCGGLLLGTRKAREHSETLACVGPVDAQAIKLYVRSWKDMGFLD.

An N-terminal acylcarrier protein transacylase domain (SAT) region spans residues 111–272 (LIPLVVIEQL…TEITLYGAFH (162 aa)). Cys-154 (nucleophile; for transacylase activity) is an active-site residue. The Proton donor/acceptor; for transacylase activity role is filled by His-272. In terms of domain architecture, Ketosynthase family 3 (KS3) spans 401 to 826 (ESDIAVIGMA…GSNASMIVMQ (426 aa)). Catalysis depends on for beta-ketoacyl synthase activity residues Cys-573, His-708, and His-749. The tract at residues 947–1237 (FGGQVSTHIG…ITAMTSRALD (291 aa)) is malonyl-CoA:ACP transacylase (MAT) domain. An N-terminal hotdog fold region spans residues 1339-1468 (LTFVGFQDSS…GKIKFTNARD (130 aa)). In terms of domain architecture, PKS/mFAS DH spans 1339–1651 (LTFVGFQDSS…YVKIPKLSMQ (313 aa)). The tract at residues 1367–1649 (LLLGHMTIQT…IAYVKIPKLS (283 aa)) is product template (PT) domain. His-1371 serves as the catalytic Proton acceptor; for dehydratase activity. Positions 1496 to 1651 (VDEVLANRSI…YVKIPKLSMQ (156 aa)) are C-terminal hotdog fold. The active-site Proton donor; for dehydratase activity is Asp-1555. Residues 1723–1797 (ENITERVKAV…DLMKVVTGVV (75 aa)) form the Carrier domain. Ser-1757 is modified (O-(pantetheine 4'-phosphoryl)serine). Positions 2021 to 2211 (EWPLNQVMYT…AGYGHVYWTE (191 aa)) are methyltransferase domain. The NADPH-binding (R) domain stretch occupies residues 2303–2548 (VTGATGGLGA…LGWTPADAIA (246 aa)).

It functions in the pathway secondary metabolite biosynthesis; terpenoid biosynthesis. Functionally, non-reducing polyketide synthase; part of the gene cluster that mediates the biosynthesis of eupenifeldin, a bistropolone meroterpenoid that acts as an antitumor agent. The first step of eupenifeldin biosynthesis is the biosynthesis of 3-methylorcinaldehyde performed by the non-reducing polyketide synthase eupA. Oxidative dearomatization of 3-methylorcinaldehyde likely catalyzed by the FAD-dependent monooxygenase eupB is followed by oxidative ring expansion by the 2-oxoglutarate-dependent dioxygenase eupC to provide the first tropolone metabolite, tropolone stipitaldehyde. In parallel, generation of sesquiterpene alpha-humulene from farnesylpyrophosphate (FPP) is catalyzed by the terpene cyclase eupE. The cytochrome P450 monooxygenase eupD then hydroxylates humulene to humulenol. The putative Diels-Alderase eupF probably catalyzes the formation of the tropolone-humulene skeleton by linking humulenol and the polyketide moiety. The short-chain dehydrogenase/reductase eupG and the flavin-dependent monooxygenase eupH are also essential for eupenifeldin biosynthesis and are likely the additional decorating enzymes of the tropolone-humulene skeleton to produce final eupenifeldin or derivatives. The sequence is that of 3-methylorcinaldehyde synthase from Phoma sp.